A 277-amino-acid polypeptide reads, in one-letter code: Transport and Golgi organization protein 11 (277 aa).

The Cytoplasmic segment spans residues 1–256 (MVTPQSPTPM…NNEQRTQREK (256 aa)). Disordered stretches follow at residues 124-148 (HFPSASEESSPIRANGHHLYGNDLD) and 167-200 (VARMGFQGNDTNSVESDSQLTTGSASKRSQLNQQ). Phosphoserine occurs at positions 127, 129, 132, and 133. Polar residues predominate over residues 174–200 (GNDTNSVESDSQLTTGSASKRSQLNQQ). T177 bears the Phosphothreonine mark. Phosphoserine is present on residues S179, S182, and S190. T216 and T222 each carry phosphothreonine. Positions 225-253 (EEILYLRRQLAKLNRRVLNIEINNEQRTQ) form a coiled coil. The chain crosses the membrane as a helical; Anchor for type IV membrane protein span at residues 257 to 274 (IVYCLGLAYFVLKTIFWL). Residues 275 to 277 (NRN) lie on the Lumenal side of the membrane.

The protein belongs to the Tango11 family.

The protein resides in the endoplasmic reticulum membrane. The protein localises to the mitochondrion outer membrane. It localises to the peroxisome. May play a role in mitochondrial and peroxisomal fission. The polypeptide is Transport and Golgi organization protein 11 (Tango11) (Drosophila melanogaster (Fruit fly)).